The primary structure comprises 486 residues: Glutamate--tRNA ligase (486 aa).

Positions 11–21 (PSPTGLLHIGN) match the 'HIGH' region motif. The short motif at 255–259 (KLSKR) is the 'KMSKS' region element. Lys258 is an ATP binding site.

It belongs to the class-I aminoacyl-tRNA synthetase family. Glutamate--tRNA ligase type 1 subfamily. As to quaternary structure, monomer.

The protein resides in the cytoplasm. The catalysed reaction is tRNA(Glu) + L-glutamate + ATP = L-glutamyl-tRNA(Glu) + AMP + diphosphate. In terms of biological role, catalyzes the attachment of glutamate to tRNA(Glu) in a two-step reaction: glutamate is first activated by ATP to form Glu-AMP and then transferred to the acceptor end of tRNA(Glu). The protein is Glutamate--tRNA ligase of Streptococcus pneumoniae serotype 19F (strain G54).